The sequence spans 340 residues: Phenylalanine--tRNA ligase alpha subunit (340 aa).

Glu255 is a Mg(2+) binding site.

Belongs to the class-II aminoacyl-tRNA synthetase family. Phe-tRNA synthetase alpha subunit type 1 subfamily. In terms of assembly, tetramer of two alpha and two beta subunits. Requires Mg(2+) as cofactor.

It localises to the cytoplasm. The catalysed reaction is tRNA(Phe) + L-phenylalanine + ATP = L-phenylalanyl-tRNA(Phe) + AMP + diphosphate + H(+). The protein is Phenylalanine--tRNA ligase alpha subunit of Desulfitobacterium hafniense (strain Y51).